Reading from the N-terminus, the 398-residue chain is Putative FBD-associated F-box protein At5g56700 (398 aa).

In terms of domain architecture, F-box spans 1–47 (MAKISDLSDELLVKILSFLPTKEAVSTSCLSKQWEFLWMWLSKLEFY). An FBD domain is found at 340-388 (WKNNKSSVPKCLLESLETFEFAGYIGTPEERDFLSYIFKHARCLKSSSI).

This chain is Putative FBD-associated F-box protein At5g56700, found in Arabidopsis thaliana (Mouse-ear cress).